Consider the following 568-residue polypeptide: DNA ligase (568 aa).

Glu249 is an ATP binding site. Lys251 functions as the N6-AMP-lysine intermediate in the catalytic mechanism. Positions 256, 271, 301, 342, 418, and 424 each coordinate ATP.

The protein belongs to the ATP-dependent DNA ligase family. Mg(2+) serves as cofactor.

The catalysed reaction is ATP + (deoxyribonucleotide)n-3'-hydroxyl + 5'-phospho-(deoxyribonucleotide)m = (deoxyribonucleotide)n+m + AMP + diphosphate.. Functionally, DNA ligase that seals nicks in double-stranded DNA during DNA replication, DNA recombination and DNA repair. The chain is DNA ligase from Methanocella arvoryzae (strain DSM 22066 / NBRC 105507 / MRE50).